The sequence spans 2055 residues: Protein PHOTOPERIOD-INDEPENDENT EARLY FLOWERING 1 (2055 aa).

The segment at 1–47 is disordered; it reads MASKGGKSKPDIVMASKSGKSKPDNESRAKRQKTLEAPKEPRRPKTH. Positions 21 to 47 are enriched in basic and acidic residues; the sequence is SKPDNESRAKRQKTLEAPKEPRRPKTH. The Nuclear localization signal 1 signature appears at 29-36; it reads AKRQKTLE. Positions 35-107 constitute an HSA domain; it reads LEAPKEPRRP…EEQRLRKVAL (73 aa). Coiled-coil stretches lie at residues 78–147 and 229–250; these read LRAS…LEFL and EEDEKHFTKRERQEELEALQNE. Disordered regions lie at residues 183–332 and 340–359; these read KSDE…SNDS and ETHSHDLEPGMTTASVKSRK. Over residues 208-230 the composition is skewed to acidic residues; that stretch reads ELDEDYDLKSEDETEDDEDTIEE. Composition is skewed to basic and acidic residues over residues 231–243 and 267–276; these read DEKHFTKRERQEE and VSRETSPVKD. Residues 392–416 adopt a coiled-coil conformation; that stretch reads EEELAKADNEDHVEEIALLQKESEM. The disordered stretch occupies residues 432 to 461; that stretch reads KDISEDESESSFAVSEDSIVDSDENRQQAD. Residues 548–713 enclose the Helicase ATP-binding domain; that stretch reads VTMYEKKLNG…WSLMHFLMPH (166 aa). An ATP-binding site is contributed by 561-568; it reads DEMGLGKT. Residues 664–667 carry the DEAH box motif; the sequence is DEAH. Residues 1076 to 1229 enclose the Helicase C-terminal domain; it reads KLQELAMLLR…NLVIQNGEYN (154 aa). The disordered stretch occupies residues 1293–1313; the sequence is EEAVDNQEFTEEPVERPEDDE. A coiled-coil region spans residues 1419 to 1492; that stretch reads FEEKEWELDH…EREAAEVAEM (74 aa). Short sequence motifs (nuclear localization signal) lie at residues 1506–1513 and 1570–1577; these read KKKKKAKK and KKRDLIVD. The tract at residues 1577–1597 is disordered; the sequence is DTDEEKTSKKKAKKHKKSLPN. Positions 1584 to 1594 are enriched in basic residues; sequence SKKKAKKHKKS. In terms of domain architecture, Myb-like spans 1673 to 1727; sequence SWLPQEDAILCAMVHEYGPNWNFVSGTLYGMTAGGAYRGRYRHPAYCCERYRELI. 2 disordered regions span residues 1843 to 1864 and 1951 to 1977; these read ALQDSGPSQPDNTISRSRLQET and KSRTGTKAQSLGKHKLSASDSAKSTKS. Residues 1844–1864 are compositionally biased toward polar residues; that stretch reads LQDSGPSQPDNTISRSRLQET. Residues 2006–2029 are a coiled coil; that stretch reads GDREEEEEQEVDEKANSAEIEMIS.

This sequence belongs to the SNF2/RAD54 helicase family. SWR1 subfamily. As to quaternary structure, component of the SWR1 chromatin-remodeling complex composed of at least ARP6/ESD1/SUF3, PIE1, SWC6, SWC2 and H2AZs (HTA8, HTA9, HTA11). Interacts (via c-terminus) with SWC6 and ARP6 and (via N-terminus) with H2AZs. In terms of tissue distribution, expressed in ovules, but not in stamens.

It localises to the nucleus. The catalysed reaction is ATP + H2O = ADP + phosphate + H(+). Its function is as follows. Component of the SWR1 complex which mediates the ATP-dependent exchange of histone H2A for the H2A variant H2A.F/Z leading to transcriptional regulation of selected genes (e.g. FLC) by chromatin remodeling. Probable DNA-dependent ATPase. Not involved in the repression of FLC in gametophytes, but required for the reactivation of FLC in early embryos and for the maintenance of full activation of FLC in late embryos. In Arabidopsis thaliana (Mouse-ear cress), this protein is Protein PHOTOPERIOD-INDEPENDENT EARLY FLOWERING 1 (PIE1).